The following is a 261-amino-acid chain: Ribosomal RNA small subunit methyltransferase G (261 aa).

Residues Gly94, Leu99, 117–119, 145–146, and Arg164 each bind S-adenosyl-L-methionine; these read EST and VE.

It belongs to the methyltransferase superfamily. RNA methyltransferase RsmG family.

Its subcellular location is the cytoplasm. Its function is as follows. Specifically methylates the N7 position of a guanine in 16S rRNA. This chain is Ribosomal RNA small subunit methyltransferase G, found in Rubrobacter xylanophilus (strain DSM 9941 / JCM 11954 / NBRC 16129 / PRD-1).